The sequence spans 147 residues: Hemoglobin subunit beta-3 (147 aa).

The Globin domain occupies 3–147; the sequence is HWTAEEKAVI…LVDALSHSYH (145 aa). Heme b-binding residues include His64 and His93.

The protein belongs to the globin family. Heterotetramer of two alpha chains and two beta chains. Red blood cells.

Functionally, this is a tadpole (larval) beta chain. In Aquarana catesbeiana (American bullfrog), this protein is Hemoglobin subunit beta-3.